The primary structure comprises 202 residues: Recombination protein RecR (202 aa).

The C4-type zinc finger occupies cysteine 61–cysteine 76. Residues serine 84–proline 179 form the Toprim domain.

This sequence belongs to the RecR family.

Functionally, may play a role in DNA repair. It seems to be involved in an RecBC-independent recombinational process of DNA repair. It may act with RecF and RecO. In Bordetella petrii (strain ATCC BAA-461 / DSM 12804 / CCUG 43448), this protein is Recombination protein RecR.